A 108-amino-acid polypeptide reads, in one-letter code: Probable chaperone-like protein YdbL (108 aa).

An N-terminal signal peptide occupies residues 1–21; sequence MKKTLLLCAFLVGLVSSNVMA.

It is found in the periplasm. Probably acts as a chaperone-like protein that contributes to, but is not required for, the formation of the YdbH-YnbE intermembrane bridge. Affects the function and the structure of the YdbH-YnbE complex. Overexpression of ydbL causes a negative effect on YdbH-YnbE function. This chain is Probable chaperone-like protein YdbL (ydbL), found in Escherichia coli (strain K12).